The chain runs to 189 residues: ATP synthase subunit delta (189 aa).

Belongs to the ATPase delta chain family. F-type ATPases have 2 components, F(1) - the catalytic core - and F(0) - the membrane proton channel. F(1) has five subunits: alpha(3), beta(3), gamma(1), delta(1), epsilon(1). F(0) has three main subunits: a(1), b(2) and c(10-14). The alpha and beta chains form an alternating ring which encloses part of the gamma chain. F(1) is attached to F(0) by a central stalk formed by the gamma and epsilon chains, while a peripheral stalk is formed by the delta and b chains.

The protein resides in the cell inner membrane. Functionally, f(1)F(0) ATP synthase produces ATP from ADP in the presence of a proton or sodium gradient. F-type ATPases consist of two structural domains, F(1) containing the extramembraneous catalytic core and F(0) containing the membrane proton channel, linked together by a central stalk and a peripheral stalk. During catalysis, ATP synthesis in the catalytic domain of F(1) is coupled via a rotary mechanism of the central stalk subunits to proton translocation. Its function is as follows. This protein is part of the stalk that links CF(0) to CF(1). It either transmits conformational changes from CF(0) to CF(1) or is implicated in proton conduction. The protein is ATP synthase subunit delta of Methylorubrum populi (strain ATCC BAA-705 / NCIMB 13946 / BJ001) (Methylobacterium populi).